Here is a 2763-residue protein sequence, read N- to C-terminus: Large tegument protein deneddylase (2763 aa).

Positions 1 to 247 (MDIIPPIAVT…CDTYFTDEQY (247 aa)) are deubiquitination activity. In terms of domain architecture, Peptidase C76 spans 12–237 (AGVGSRNQFD…SSAVTLIYGS (226 aa)). Active-site residues include cysteine 32, aspartate 168, and histidine 170. Residues 495 to 523 (LELFINLTILRLTGFVVENGTRTHHGATS) form an interaction with inner tegument protein region. 8 tandem repeats follow at residues 2455-2457 (PVQ), 2458-2460 (PVQ), 2461-2463 (PAQ), 2464-2466 (PVQ), 2467-2469 (PAQ), 2470-2472 (PAQ), 2473-2475 (PVQ), and 2476-2478 (PAQ). The segment at 2455–2478 (PVQPVQPAQPVQPAQPAQPVQPAQ) is 8 X 3 AA repeats of P-A/V-Q. The tract at residues 2630–2651 (NYKTRQPSPNFPRDVHTWGVSS) is disordered.

The protein belongs to the herpesviridae large tegument protein family. Interacts with host CUL1 and CUL4A; these interactions inhibit the E3 ligase activity of cullins. Interacts with inner tegument protein. Interacts with capsid vertex specific component CVC2. Interacts with the major capsid protein/MCP.

It is found in the virion tegument. Its subcellular location is the host cytoplasm. It localises to the host nucleus. It carries out the reaction Thiol-dependent hydrolysis of ester, thioester, amide, peptide and isopeptide bonds formed by the C-terminal Gly of ubiquitin (a 76-residue protein attached to proteins as an intracellular targeting signal).. Functionally, large tegument protein that plays multiple roles in the viral cycle. During viral entry, remains associated with the capsid while most of the tegument is detached and participates in the capsid transport toward the host nucleus. Plays a role in the routing of the capsid at the nuclear pore complex and subsequent uncoating. Within the host nucleus, acts as a deneddylase and promotes the degradation of nuclear CRLs (cullin-RING ubiquitin ligases) and thereby stabilizes nuclear CRL substrates, while cytoplasmic CRLs remain unaffected. These modifications prevent host cell cycle S-phase progression and create a favorable environment allowing efficient viral genome replication. Participates later in the secondary envelopment of capsids. Indeed, plays a linker role for the association of the outer viral tegument to the capsids together with the inner tegument protein. The chain is Large tegument protein deneddylase from Varicella-zoster virus (strain Oka vaccine) (HHV-3).